Consider the following 593-residue polypeptide: MSAPAAGATAGGDDAADRNVEMWKIKRLIKSLELARGNGTSMISLIIPPKDQVARIQRMLAEEYGTASNIKSRVNRLSVLGAITSVQGRLKLYNKVPPNGLVVYCGTIMTDEGKEKKVNIDFEPFKAINTSLYLCDNKFHTEALQGLLADDNKFGFIIMDGNGCLFGTLQGNTREVLHKFTVDLPKKHGRGGQSAVRFARLRNEKRHNYVRKVAENSVEQFIKNDKVTVAGLILAGSADFKTELGQSDMFDQRLQAKMIKTVDIAYGGENGFNQAIELAADTLASVKFIQEKKLIGGYFDEISQDTGKYVFGVKDTLAALEMGAIETLICWENLDIVRYKMKNSLGEDILLNLRPDEEKDKSHFTDSETGQDMEIIETMPLLEWFANNYKNFGAALEIVTDKSQEGAQFVRGFGGIGGLLRYRVDLAHVDLEDELDNIDLDDYSRAAVVSHWAPYSFLLLFKLVSSFFFINLFINYPALSNYNISLSQSSSSLIAISHTTLYSKFLFHFIEFAPRVPHYCRFVWSVDAFSSAGKASHVCQHTEKETFHARNEDAIGGLFNRTKVEARATHSHSMTSTLSLPSVDVSTRNSNDF.

This sequence belongs to the eukaryotic release factor 1 family. Heterodimer of two subunits, one of which binds GTP.

It localises to the cytoplasm. Its function is as follows. Directs the termination of nascent peptide synthesis (translation) in response to the termination codons UAA, UAG and UGA. This chain is Eukaryotic peptide chain release factor subunit 1, found in Caenorhabditis elegans.